Reading from the N-terminus, the 475-residue chain is Dihydrolipoyl dehydrogenase (475 aa).

Residues 36 to 45 (ERYNTLGGVC), lysine 54, and glycine 117 contribute to the FAD site. A disulfide bond links cysteine 45 and cysteine 50. Residues 182–186 (GGGII), glutamate 205, valine 238, and 270–273 (AIGR) contribute to the NAD(+) site. 2 residues coordinate FAD: aspartate 313 and alanine 321. The active-site Proton acceptor is histidine 445.

The protein belongs to the class-I pyridine nucleotide-disulfide oxidoreductase family. Requires FAD as cofactor.

It localises to the cytoplasm. It catalyses the reaction N(6)-[(R)-dihydrolipoyl]-L-lysyl-[protein] + NAD(+) = N(6)-[(R)-lipoyl]-L-lysyl-[protein] + NADH + H(+). Its function is as follows. The branched-chain alpha-keto dehydrogenase complex catalyzes the overall conversion of alpha-keto acids to acyl-CoA and CO(2). It contains multiple copies of 3 enzymatic components: branched-chain alpha-keto acid decarboxylase (E1), lipoamide acyltransferase (E2) and lipoamide dehydrogenase (E3). The chain is Dihydrolipoyl dehydrogenase (lpd) from Vibrio cholerae serotype O1 (strain ATCC 39315 / El Tor Inaba N16961).